Consider the following 296-residue polypeptide: Cytidine deaminase (296 aa).

2 consecutive CMP/dCMP-type deaminase domains span residues 47–167 (TEAE…FGPK) and 186–296 (DSSD…VDPV). 88–90 (NLE) is a binding site for substrate. A Zn(2+)-binding site is contributed by H101. E103 (proton donor) is an active-site residue. The Zn(2+) site is built by C128 and C131.

This sequence belongs to the cytidine and deoxycytidylate deaminase family. Homodimer. Requires Zn(2+) as cofactor.

It carries out the reaction cytidine + H2O + H(+) = uridine + NH4(+). The catalysed reaction is 2'-deoxycytidine + H2O + H(+) = 2'-deoxyuridine + NH4(+). Functionally, this enzyme scavenges exogenous and endogenous cytidine and 2'-deoxycytidine for UMP synthesis. The protein is Cytidine deaminase of Shewanella sp. (strain MR-7).